Reading from the N-terminus, the 297-residue chain is uncharacterized protein (297 aa).

Residues 191-211 (VMIILSCSNITILAVLSIVGL) traverse the membrane as a helical segment. The segment covering 275-287 (SKTSETQSVSGST) has biased composition (polar residues). Positions 275-297 (SKTSETQSVSGSTHSDEKLTAPM) are disordered. The segment covering 288-297 (HSDEKLTAPM) has biased composition (basic and acidic residues).

The protein localises to the host membrane. This is an uncharacterized protein from Cryphonectria parasitica mycoreovirus 1 (strain 9B21) (CpMYRV-1).